The following is a 344-amino-acid chain: uncharacterized protein (344 aa).

Residues 1–28 (MNKKSLNIVATLGILLVLAFSGCVDQSA) form the signal peptide.

It belongs to the bacterial solute-binding protein 1 family. WtpA subfamily.

This is an uncharacterized protein from Methanococcus maripaludis (strain C7 / ATCC BAA-1331).